The following is a 43-amino-acid chain: Protein PsbN (43 aa).

The helical transmembrane segment at 5–27 threads the bilayer; the sequence is NLVTISISCLLVSLTGYAIYTSF.

Belongs to the PsbN family.

It localises to the plastid. The protein resides in the chloroplast thylakoid membrane. In terms of biological role, may play a role in photosystem I and II biogenesis. The chain is Protein PsbN from Gnetum gnemon (Spanish joint-fir).